A 68-amino-acid chain; its full sequence is Galectin-10 (68 aa).

In terms of domain architecture, Galectin spans 1 to 68 (EPYLQVDFHT…LSISVLPDKY (68 aa)).

In terms of assembly, interacts with CEL.

The protein localises to the cytoplasm. Its subcellular location is the cytosol. The protein resides in the cytoplasmic granule. Its function is as follows. Regulates immune responses through the recognition of cell-surface glycans. Essential for the anergy and suppressive function of CD25-positive regulatory T-cells (Treg). This chain is Galectin-10 (CLC), found in Pongo pygmaeus (Bornean orangutan).